A 299-amino-acid chain; its full sequence is Acetaldehyde dehydrogenase 2 (299 aa).

Catalysis depends on Cys130, which acts as the Acyl-thioester intermediate. Residues 161-169 (SVGPGTRKN) and Asn272 contribute to the NAD(+) site.

It belongs to the acetaldehyde dehydrogenase family.

The catalysed reaction is acetaldehyde + NAD(+) + CoA = acetyl-CoA + NADH + H(+). This is Acetaldehyde dehydrogenase 2 from Burkholderia lata (strain ATCC 17760 / DSM 23089 / LMG 22485 / NCIMB 9086 / R18194 / 383).